Reading from the N-terminus, the 116-residue chain is Large ribosomal subunit protein bL17 (116 aa).

Belongs to the bacterial ribosomal protein bL17 family. As to quaternary structure, part of the 50S ribosomal subunit. Contacts protein L32.

The polypeptide is Large ribosomal subunit protein bL17 (Gloeothece citriformis (strain PCC 7424) (Cyanothece sp. (strain PCC 7424))).